Here is a 503-residue protein sequence, read N- to C-terminus: Major facilitator superfamily domain-containing protein 4A (503 aa).

A run of 12 helical transmembrane segments spans residues 19 to 39 (LTYWSVFFSFGLCIAFLGPTL), 53 to 73 (ITWVFFAQQFCLLVGSTLGGV), 82 to 102 (LFLLFLSSLTISVVFVIIPFC), 105 to 125 (VGVLALVMAIAGLAMGCIDTI), 139 to 159 (AIFLQVLHFFVGFGALLSPLI), 214 to 234 (YAFWIMAAINLPVPVAVFYLI), 289 to 309 (IWNAPFTFFAIHMCAAVTLFM), 338 to 358 (GYLPSLFWAFITLGRLISIPV), 366 to 386 (SMLFINLIGVTATFLFLLLSQ), 392 to 412 (MFVGTALLGLWLSSVFPSMLA), 427 to 447 (VLVTGAGMGEMVLQILVGSVM), and 455 to 475 (FLVCGICLSSLAFTLYAVLLV). The tract at residues 484-503 (SEDSACKPPGLDGEATSYQS) is disordered.

The protein belongs to the major facilitator superfamily.

Its subcellular location is the membrane. This is Major facilitator superfamily domain-containing protein 4A (mfsd4a) from Xenopus tropicalis (Western clawed frog).